The sequence spans 1114 residues: Kinesin-like protein KIN-12F (1114 aa).

Residues 1-84 (MADNRIAGSL…RSQVSASRPR (84 aa)) are disordered. Composition is skewed to polar residues over residues 10–39 (LPTS…SNPD) and 48–80 (PNIH…QVSA). The Kinesin motor domain maps to 104–436 (HVKVVVRIKP…LRFGERAKAM (333 aa)). An ATP-binding site is contributed by 175–182 (GQNGSGKT). 3 coiled-coil regions span residues 761–791 (QQEL…QTED), 872–942 (ARSF…LRRA), and 1038–1081 (EVLV…HKLE). A disordered region spans residues 1092–1114 (NTLPESALQPLHQRNSAIEEEGM).

Belongs to the TRAFAC class myosin-kinesin ATPase superfamily. Kinesin family. KIN-12 subfamily.

The polypeptide is Kinesin-like protein KIN-12F (Arabidopsis thaliana (Mouse-ear cress)).